Consider the following 142-residue polypeptide: uncharacterized protein (142 aa).

This is an uncharacterized protein from Acanthamoeba polyphaga (Amoeba).